Consider the following 373-residue polypeptide: Core trichothecene cluster (CTC) protein 14 (373 aa).

The protein belongs to the TRI14 family.

In terms of biological role, part of the core gene cluster that mediates the biosynthesis of trichothecenes, a very large family of chemically related bicyclic sesquiterpene compounds acting as mycotoxins, including T2-toxin. The biosynthesis of trichothecenes begins with the cyclization of farnesyl diphosphate to trichodiene and is catalyzed by the trichodiene synthase TRI5. Trichodiene undergoes a series of oxygenations catalyzed by the cytochrome P450 monooxygenase TRI4. TRI4 controls the addition of four oxygens at C-2, C-3, C-11, and the C-12, C-13-epoxide to form the intermediate isotrichotriol. Isotrichotriol then undergoes a non-enzymatic isomerization and cyclization to form isotrichodermol. During this process, the oxygen at the C-2 position becomes the pyran ring oxygen and the hydroxyl group at C-11 is lost. More complex type A trichothecenes are built by modifying isotrichodermol through a series of paired hydroxylation and acetylation or acylation steps. Isotrichodermol is converted to isotrichodermin by the acetyltransferase TRI101. TRI101 encodes a C-3 transacetylase that acts as a self-protection or resistance factor during biosynthesis and that the presence of a free C-3 hydroxyl group is a key component of Fusarium trichothecene phytotoxicity. A second hydroxyl group is added to C-15 by the trichothecene C-15 hydroxylase TRI11, producing 15-decalonectrin, which is then acetylated by TRI3, producing calonectrin. A third hydroxyl group is added at C-4 by the cytochrome P450 monooxygenase TRI13, converting calonectrin to 3,15-diacetoxyspirpenol, which is subsequently acetylated bythe acetyltransferase TRI7. A fourth hydroxyl group is added to C-8 by the cytochrome P450 monooxygenase TRI1, followed by the addition of an isovaleryl moiety by TRI16. Finally, the acetyl group is removed from the C-3 position by the trichothecene C-3 esterase TRI8 to produce T-2 toxin. In Fusarium sporotrichioides, this protein is Core trichothecene cluster (CTC) protein 14.